A 546-amino-acid polypeptide reads, in one-letter code: Chaperonin GroEL (546 aa).

Residues Thr-30–Pro-33, Lys-51, Asp-87–Thr-91, Gly-415, Asn-479–Ala-481, and Asp-495 each bind ATP.

The protein belongs to the chaperonin (HSP60) family. In terms of assembly, forms a cylinder of 14 subunits composed of two heptameric rings stacked back-to-back. Interacts with the co-chaperonin GroES.

It localises to the cytoplasm. The enzyme catalyses ATP + H2O + a folded polypeptide = ADP + phosphate + an unfolded polypeptide.. Functionally, together with its co-chaperonin GroES, plays an essential role in assisting protein folding. The GroEL-GroES system forms a nano-cage that allows encapsulation of the non-native substrate proteins and provides a physical environment optimized to promote and accelerate protein folding. The protein is Chaperonin GroEL of Paraburkholderia phytofirmans (strain DSM 17436 / LMG 22146 / PsJN) (Burkholderia phytofirmans).